Reading from the N-terminus, the 508-residue chain is Photosystem II CP47 reaction center protein (508 aa).

The next 6 membrane-spanning stretches (helical) occupy residues 21–36 (SVHI…WAGS), 101–115 (IMFS…IWHW), 140–156 (GIHL…FGAF), 203–218 (IAAG…FHLS), 237–252 (VLSS…AFVV), and 457–472 (SFAL…HGAR).

The protein belongs to the PsbB/PsbC family. PsbB subfamily. As to quaternary structure, PSII is composed of 1 copy each of membrane proteins PsbA, PsbB, PsbC, PsbD, PsbE, PsbF, PsbH, PsbI, PsbJ, PsbK, PsbL, PsbM, PsbT, PsbX, PsbY, PsbZ, Psb30/Ycf12, at least 3 peripheral proteins of the oxygen-evolving complex and a large number of cofactors. It forms dimeric complexes. The cofactor is Binds multiple chlorophylls. PSII binds additional chlorophylls, carotenoids and specific lipids..

The protein localises to the plastid. The protein resides in the chloroplast thylakoid membrane. Functionally, one of the components of the core complex of photosystem II (PSII). It binds chlorophyll and helps catalyze the primary light-induced photochemical processes of PSII. PSII is a light-driven water:plastoquinone oxidoreductase, using light energy to abstract electrons from H(2)O, generating O(2) and a proton gradient subsequently used for ATP formation. This is Photosystem II CP47 reaction center protein from Ceratophyllum demersum (Rigid hornwort).